Here is a 159-residue protein sequence, read N- to C-terminus: MSRMPSSFDVTERDLDDMTFGERIIYHCKKQPLVPIGCLLTTGAVILAAQNVRLGNKWKAQYYFRWRVGLQAATLVALVAGSFIYGTSGKELKAKEEQLKEKAKMREKLWIQELERREEETEARRKRAELARMKTLENEEEIKNLEKELSDLENKLGKK.

One can recognise an HIG1 domain in the interval 5-96; sequence PSSFDVTERD…TSGKELKAKE (92 aa). 2 helical membrane passes run 32-52 and 68-88; these read PLVP…AQNV and VGLQ…YGTS. Residues 88 to 159 are a coiled coil; that stretch reads SGKELKAKEE…SDLENKLGKK (72 aa).

The protein belongs to the RCF1 family. In terms of assembly, associates with the respiratory chain complex III/complex IV supercomplex. Interacts with COX3.

It is found in the mitochondrion membrane. Cytochrome c oxidase subunit required for growth under hypoxic conditions. Involved in the assembly of the Complex III-Complex IV supercomplex, as well as in the recruitment of COX13 and RCF2 into cytochrome c oxidase. May also be required for late-stage assembly of the COX12 and COX13 subunits and for cytochrome c oxidase activity. In Saccharomyces cerevisiae (strain RM11-1a) (Baker's yeast), this protein is Respiratory supercomplex factor 1, mitochondrial (RCF1).